Here is a 301-residue protein sequence, read N- to C-terminus: N-acetylmuramic acid 6-phosphate etherase (301 aa).

Residues 57–220 (VVERLRAGGR…STISMVRLGK (164 aa)) form the SIS domain. Residue E85 is the Proton donor of the active site. E116 is an active-site residue.

Belongs to the GCKR-like family. MurNAc-6-P etherase subfamily. As to quaternary structure, homodimer.

It catalyses the reaction N-acetyl-D-muramate 6-phosphate + H2O = N-acetyl-D-glucosamine 6-phosphate + (R)-lactate. It participates in amino-sugar metabolism; N-acetylmuramate degradation. In terms of biological role, specifically catalyzes the cleavage of the D-lactyl ether substituent of MurNAc 6-phosphate, producing GlcNAc 6-phosphate and D-lactate. The polypeptide is N-acetylmuramic acid 6-phosphate etherase (Rubrobacter xylanophilus (strain DSM 9941 / JCM 11954 / NBRC 16129 / PRD-1)).